A 345-amino-acid polypeptide reads, in one-letter code: Phosphate acyltransferase (345 aa).

The protein belongs to the PlsX family. As to quaternary structure, homodimer. Probably interacts with PlsY.

The protein localises to the cytoplasm. The catalysed reaction is a fatty acyl-[ACP] + phosphate = an acyl phosphate + holo-[ACP]. It functions in the pathway lipid metabolism; phospholipid metabolism. Functionally, catalyzes the reversible formation of acyl-phosphate (acyl-PO(4)) from acyl-[acyl-carrier-protein] (acyl-ACP). This enzyme utilizes acyl-ACP as fatty acyl donor, but not acyl-CoA. This is Phosphate acyltransferase from Wolbachia pipientis wMel.